Consider the following 234-residue polypeptide: tRNA1(Val) (adenine(37)-N6)-methyltransferase (234 aa).

Belongs to the methyltransferase superfamily. tRNA (adenine-N(6)-)-methyltransferase family.

It localises to the cytoplasm. The catalysed reaction is adenosine(37) in tRNA1(Val) + S-adenosyl-L-methionine = N(6)-methyladenosine(37) in tRNA1(Val) + S-adenosyl-L-homocysteine + H(+). Its function is as follows. Specifically methylates the adenine in position 37 of tRNA(1)(Val) (anticodon cmo5UAC). In Phocaeicola vulgatus (strain ATCC 8482 / DSM 1447 / JCM 5826 / CCUG 4940 / NBRC 14291 / NCTC 11154) (Bacteroides vulgatus), this protein is tRNA1(Val) (adenine(37)-N6)-methyltransferase.